The primary structure comprises 78 residues: Translation initiation factor IF-1, chloroplastic (78 aa).

One can recognise an S1-like domain in the interval 1 to 72 (MKKQNLIEME…TKGRITYRLR (72 aa)).

Belongs to the IF-1 family. As to quaternary structure, component of the 30S ribosomal translation pre-initiation complex which assembles on the 30S ribosome in the order IF-2 and IF-3, IF-1 and N-formylmethionyl-tRNA(fMet); mRNA recruitment can occur at any time during PIC assembly.

It is found in the plastid. It localises to the chloroplast. Functionally, one of the essential components for the initiation of protein synthesis. Stabilizes the binding of IF-2 and IF-3 on the 30S subunit to which N-formylmethionyl-tRNA(fMet) subsequently binds. Helps modulate mRNA selection, yielding the 30S pre-initiation complex (PIC). Upon addition of the 50S ribosomal subunit IF-1, IF-2 and IF-3 are released leaving the mature 70S translation initiation complex. This is Translation initiation factor IF-1, chloroplastic from Chaetosphaeridium globosum (Charophycean green alga).